Consider the following 394-residue polypeptide: Acetate kinase 1 (394 aa).

Residue Asn-8 participates in Mg(2+) binding. Lys-15 contributes to the ATP binding site. Position 90 (Arg-90) interacts with substrate. Asp-147 functions as the Proton donor/acceptor in the catalytic mechanism. ATP contacts are provided by residues His-207–Gly-211 and Asp-282–Arg-284. Position 382 (Glu-382) interacts with Mg(2+).

This sequence belongs to the acetokinase family. In terms of assembly, homodimer. Mg(2+) is required as a cofactor. Requires Mn(2+) as cofactor.

It is found in the cytoplasm. It carries out the reaction acetate + ATP = acetyl phosphate + ADP. It participates in metabolic intermediate biosynthesis; acetyl-CoA biosynthesis; acetyl-CoA from acetate: step 1/2. Functionally, catalyzes the formation of acetyl phosphate from acetate and ATP. Can also catalyze the reverse reaction. This Latilactobacillus sakei subsp. sakei (strain 23K) (Lactobacillus sakei subsp. sakei) protein is Acetate kinase 1.